A 108-amino-acid polypeptide reads, in one-letter code: T-cell acute lymphocytic leukemia protein 2 homolog (108 aa).

In terms of domain architecture, bHLH spans 2-54 (TRKIFTNTRERWRQQSVNNAFAKLRKLIPTHPPDKKLSKNETLRLAMRYINFL). The interval 76-108 (GLFPPKTRLPDEDDRTLLNDYRVPSPGPSHGAP) is disordered.

This chain is T-cell acute lymphocytic leukemia protein 2 homolog (Tal2), found in Mus musculus (Mouse).